We begin with the raw amino-acid sequence, 335 residues long: Glucokinase (335 aa).

An ATP-binding site is contributed by 11 to 16; sequence ADIGGT.

It belongs to the bacterial glucokinase family.

It localises to the cytoplasm. It carries out the reaction D-glucose + ATP = D-glucose 6-phosphate + ADP + H(+). The sequence is that of Glucokinase from Xanthomonas campestris pv. campestris (strain B100).